The chain runs to 236 residues: 2-C-methyl-D-erythritol 4-phosphate cytidylyltransferase (236 aa).

It belongs to the IspD/TarI cytidylyltransferase family. IspD subfamily. In terms of assembly, homodimer.

The catalysed reaction is 2-C-methyl-D-erythritol 4-phosphate + CTP + H(+) = 4-CDP-2-C-methyl-D-erythritol + diphosphate. The protein operates within isoprenoid biosynthesis; isopentenyl diphosphate biosynthesis via DXP pathway; isopentenyl diphosphate from 1-deoxy-D-xylulose 5-phosphate: step 2/6. Catalyzes the formation of 4-diphosphocytidyl-2-C-methyl-D-erythritol from CTP and 2-C-methyl-D-erythritol 4-phosphate (MEP). This is 2-C-methyl-D-erythritol 4-phosphate cytidylyltransferase from Salmonella typhimurium (strain LT2 / SGSC1412 / ATCC 700720).